The following is a 91-amino-acid chain: UPF0512 protein F (91 aa).

It belongs to the UPF0512 family.

In Dictyostelium discoideum (Social amoeba), this protein is UPF0512 protein F.